A 165-amino-acid chain; its full sequence is S-ribosylhomocysteine lyase (165 aa).

Fe cation contacts are provided by His-54, His-58, and Cys-128.

It belongs to the LuxS family. In terms of assembly, homodimer. It depends on Fe cation as a cofactor.

It carries out the reaction S-(5-deoxy-D-ribos-5-yl)-L-homocysteine = (S)-4,5-dihydroxypentane-2,3-dione + L-homocysteine. In terms of biological role, involved in the synthesis of autoinducer 2 (AI-2) which is secreted by bacteria and is used to communicate both the cell density and the metabolic potential of the environment. The regulation of gene expression in response to changes in cell density is called quorum sensing. Catalyzes the transformation of S-ribosylhomocysteine (RHC) to homocysteine (HC) and 4,5-dihydroxy-2,3-pentadione (DPD). In Helicobacter hepaticus (strain ATCC 51449 / 3B1), this protein is S-ribosylhomocysteine lyase.